Here is a 172-residue protein sequence, read N- to C-terminus: Adenine phosphoribosyltransferase (172 aa).

This sequence belongs to the purine/pyrimidine phosphoribosyltransferase family. Homodimer.

The protein localises to the cytoplasm. It catalyses the reaction AMP + diphosphate = 5-phospho-alpha-D-ribose 1-diphosphate + adenine. It participates in purine metabolism; AMP biosynthesis via salvage pathway; AMP from adenine: step 1/1. Its function is as follows. Catalyzes a salvage reaction resulting in the formation of AMP, that is energically less costly than de novo synthesis. The chain is Adenine phosphoribosyltransferase from Alkaliphilus oremlandii (strain OhILAs) (Clostridium oremlandii (strain OhILAs)).